A 150-amino-acid polypeptide reads, in one-letter code: Large ribosomal subunit protein bL9 (150 aa).

It belongs to the bacterial ribosomal protein bL9 family.

In terms of biological role, binds to the 23S rRNA. The chain is Large ribosomal subunit protein bL9 from Vesicomyosocius okutanii subsp. Calyptogena okutanii (strain HA).